Consider the following 367-residue polypeptide: Peptide chain release factor 2 (367 aa).

Residue Gln254 is modified to N5-methylglutamine.

It belongs to the prokaryotic/mitochondrial release factor family. Post-translationally, methylated by PrmC. Methylation increases the termination efficiency of RF2.

Its subcellular location is the cytoplasm. Peptide chain release factor 2 directs the termination of translation in response to the peptide chain termination codons UGA and UAA. This chain is Peptide chain release factor 2, found in Neisseria meningitidis serogroup C / serotype 2a (strain ATCC 700532 / DSM 15464 / FAM18).